A 115-amino-acid chain; its full sequence is U3-lycotoxin-Ls1o (115 aa).

Positions 1 to 20 (MKFVLLFGVLLVTLFSYSSA) are cleaved as a signal peptide. Positions 21 to 44 (EMLDDFDQADEDELLSLIEKEEAR) are excised as a propeptide. 4 cysteine pairs are disulfide-bonded: Cys48-Cys63, Cys55-Cys72, Cys62-Cys87, and Cys74-Cys85.

Belongs to the neurotoxin 19 (CSTX) family. 01 subfamily. In terms of tissue distribution, expressed by the venom gland.

The protein localises to the secreted. The polypeptide is U3-lycotoxin-Ls1o (Lycosa singoriensis (Wolf spider)).